Here is a 289-residue protein sequence, read N- to C-terminus: 4-diphosphocytidyl-2-C-methyl-D-erythritol kinase (289 aa).

The active site involves Lys-10. 99–109 (PMGGGLGGGSS) serves as a coordination point for ATP. Asp-141 is a catalytic residue.

The protein belongs to the GHMP kinase family. IspE subfamily. In terms of assembly, homodimer.

The catalysed reaction is 4-CDP-2-C-methyl-D-erythritol + ATP = 4-CDP-2-C-methyl-D-erythritol 2-phosphate + ADP + H(+). It functions in the pathway isoprenoid biosynthesis; isopentenyl diphosphate biosynthesis via DXP pathway; isopentenyl diphosphate from 1-deoxy-D-xylulose 5-phosphate: step 3/6. Its function is as follows. Catalyzes the phosphorylation of the position 2 hydroxy group of 4-diphosphocytidyl-2C-methyl-D-erythritol. The protein is 4-diphosphocytidyl-2-C-methyl-D-erythritol kinase of Enterobacter sp. (strain 638).